The primary structure comprises 692 residues: Elongation factor G (692 aa).

Residues 8 to 282 form the tr-type G domain; sequence EKTRNIGIMA…AVVEYMPAPT (275 aa). GTP contacts are provided by residues 17 to 24, 81 to 85, and 135 to 138; these read AHIDAGKT, DTPGH, and NKMD. Residues 285–304 are disordered; it reads PNIKGVHPETGEADERHSSD. Residues 290–304 show a composition bias toward basic and acidic residues; it reads VHPETGEADERHSSD.

Belongs to the TRAFAC class translation factor GTPase superfamily. Classic translation factor GTPase family. EF-G/EF-2 subfamily.

The protein localises to the cytoplasm. Catalyzes the GTP-dependent ribosomal translocation step during translation elongation. During this step, the ribosome changes from the pre-translocational (PRE) to the post-translocational (POST) state as the newly formed A-site-bound peptidyl-tRNA and P-site-bound deacylated tRNA move to the P and E sites, respectively. Catalyzes the coordinated movement of the two tRNA molecules, the mRNA and conformational changes in the ribosome. The polypeptide is Elongation factor G (Desulfitobacterium hafniense (strain DSM 10664 / DCB-2)).